We begin with the raw amino-acid sequence, 283 residues long: Nucleoid occlusion protein (283 aa).

Residues 142–161 (ESLAQRLGKGQSTIANKLRL) constitute a DNA-binding region (H-T-H motif).

The protein belongs to the ParB family.

The protein localises to the cytoplasm. The protein resides in the nucleoid. Its function is as follows. Effects nucleoid occlusion by binding relatively nonspecifically to DNA and preventing the assembly of the division machinery in the vicinity of the nucleoid, especially under conditions that disturb the cell cycle. It helps to coordinate cell division and chromosome segregation by preventing the formation of the Z ring through the nucleoid, which would cause chromosome breakage. The protein is Nucleoid occlusion protein of Shouchella clausii (strain KSM-K16) (Alkalihalobacillus clausii).